We begin with the raw amino-acid sequence, 97 residues long: MNIRPLHDRVIVKRKEVETKSAGGIVLTGSAAAKSTRGEIIAVGKGHILEKGTVQPLDVKVGDIVIFNDGYGVKSEKIDNEEVLIMSESDILAIVEA.

It belongs to the GroES chaperonin family. As to quaternary structure, heptamer of 7 subunits arranged in a ring. Interacts with the chaperonin GroEL.

It localises to the cytoplasm. Functionally, together with the chaperonin GroEL, plays an essential role in assisting protein folding. The GroEL-GroES system forms a nano-cage that allows encapsulation of the non-native substrate proteins and provides a physical environment optimized to promote and accelerate protein folding. GroES binds to the apical surface of the GroEL ring, thereby capping the opening of the GroEL channel. This is Co-chaperonin GroES from Klebsiella aerogenes (Enterobacter aerogenes).